Here is a 215-residue protein sequence, read N- to C-terminus: Kunitz trypsin inhibitor 2 (215 aa).

A signal peptide spans 1-23 (MKNPSVISFLIILLFAATICTHG). A disulfide bond links Cys67 and Cys114. Asn145 carries an N-linked (GlcNAc...) asparagine glycan.

The protein belongs to the protease inhibitor I3 (leguminous Kunitz-type inhibitor) family. As to quaternary structure, interacts with RD21A. Interacts with RD21B and RD21C. In terms of tissue distribution, expressed in vascular bundles of the carpels, the transmitting tract of the style and septum epidermis. Expressed in etiolated seedlings.

It is found in the secreted. It localises to the cell wall. Its subcellular location is the extracellular space. The protein localises to the apoplast. The protein resides in the endoplasmic reticulum. In terms of biological role, water-soluble and chlorophyll-binding protein that probably does not function as a chloroplast chlorophyll carrier and is not involved in photosynthesis. Involved in the control of cell death in the transmitting tract and septum epidermis during flower development. Binds and inhibits the activity of the cysteine protease RD21A as a pro-death protein. May play a role in herbivore resistance activation during seedling greening. This chain is Kunitz trypsin inhibitor 2, found in Arabidopsis thaliana (Mouse-ear cress).